A 320-amino-acid chain; its full sequence is o-succinylbenzoate synthase (320 aa).

Catalysis depends on K133, which acts as the Proton donor. 3 residues coordinate Mg(2+): D161, E190, and D213. The active-site Proton acceptor is the K235.

It belongs to the mandelate racemase/muconate lactonizing enzyme family. MenC type 1 subfamily. Requires a divalent metal cation as cofactor.

The catalysed reaction is (1R,6R)-6-hydroxy-2-succinyl-cyclohexa-2,4-diene-1-carboxylate = 2-succinylbenzoate + H2O. It participates in quinol/quinone metabolism; 1,4-dihydroxy-2-naphthoate biosynthesis; 1,4-dihydroxy-2-naphthoate from chorismate: step 4/7. Its pathway is quinol/quinone metabolism; menaquinone biosynthesis. In terms of biological role, converts 2-succinyl-6-hydroxy-2,4-cyclohexadiene-1-carboxylate (SHCHC) to 2-succinylbenzoate (OSB). In Salmonella paratyphi B (strain ATCC BAA-1250 / SPB7), this protein is o-succinylbenzoate synthase.